The sequence spans 432 residues: MGLSTVYSPAGPRLVPAPLGRCRSAQPRRPRRAPLATVRCSVDATKQAQDGVATAVATEAPASRKECFGVFCTTYDLKAEDKTKSWRKLVNVAVSGAAGMISNHLLFKLASGEVFGQDQPIALKLLGSERSFQALEGVAMELEDSLYPLLREVSIGIDPYVVFQDVDWALLIGAKPRGPGMERAALLDINGQIFADQGKALNAVASRNDEVLVVGNPCNTNALICLKNAPNIPAKNFHALTRLDENRAKCQLALKAGVFYDKVSNVTIWGNHSTTQVPDFLNAKIDGRPVKEVIKDTKWLEEEFTLTVQKRGGVLIQKWGRSSAASTAVSIVDAIRSLVTPTPEGDWFSTGVYTTGNPYGIAEDIVFSMPCRSKGDGDYELASDVLMDDFLWERIKKSEAELLAEKKCVAHLTGEGNAFCDLPEDTMLPGEV.

The N-terminal 40 residues, 1 to 40 (MGLSTVYSPAGPRLVPAPLGRCRSAQPRRPRRAPLATVRC), are a transit peptide targeting the chloroplast. The segment at 18 to 37 (PLGRCRSAQPRRPRRAPLAT) is disordered. Cysteine 67 and cysteine 72 are joined by a disulfide. NADP(+) is bound at residue 96–102 (GAAGMIS). Substrate is bound by residues arginine 177 and arginine 183. Asparagine 190 contacts NADP(+). Glutamine 197 provides a ligand contact to NAD(+). 214 to 216 (VGN) serves as a coordination point for NADP(+). Asparagine 216 and arginine 247 together coordinate substrate. Histidine 272 serves as the catalytic Proton acceptor. A disulfide bridge links cysteine 408 with cysteine 420.

It belongs to the LDH/MDH superfamily. MDH type 2 family. Homodimer.

Its subcellular location is the plastid. The protein localises to the chloroplast. The catalysed reaction is (S)-malate + NADP(+) = oxaloacetate + NADPH + H(+). Chloroplast NADP-MDH is activated upon illumination. In order to be enzymatically active, disulfide bridges on the protein must be reduced by thioredoxin which receives electrons from ferredoxin and the electron transport system of photosynthesis. Its function is as follows. The chloroplastic, NADP-dependent form is essential for the photosynthesis C4 cycle, which allows plants to circumvent the problem of photorespiration. In C4 plants, NADP-MDH activity acts to convert oxaloacetate to malate in chloroplasts of mesophyll cells for transport to the bundle sheath cells. The protein is Malate dehydrogenase [NADP], chloroplastic of Zea mays (Maize).